The primary structure comprises 126 residues: Holo-[acyl-carrier-protein] synthase (126 aa).

Residues Asp-9 and Glu-58 each coordinate Mg(2+).

Belongs to the P-Pant transferase superfamily. AcpS family. Mg(2+) serves as cofactor.

The protein localises to the cytoplasm. The enzyme catalyses apo-[ACP] + CoA = holo-[ACP] + adenosine 3',5'-bisphosphate + H(+). Functionally, transfers the 4'-phosphopantetheine moiety from coenzyme A to a Ser of acyl-carrier-protein. This is Holo-[acyl-carrier-protein] synthase from Yersinia enterocolitica serotype O:8 / biotype 1B (strain NCTC 13174 / 8081).